Here is a 162-residue protein sequence, read N- to C-terminus: Nucleotide-binding protein SCO4614 (162 aa).

Belongs to the YajQ family.

The protein localises to the cytoplasm. Its subcellular location is the nucleoid. In terms of biological role, nucleotide-binding protein. This Streptomyces coelicolor (strain ATCC BAA-471 / A3(2) / M145) protein is Nucleotide-binding protein SCO4614.